A 394-amino-acid polypeptide reads, in one-letter code: Mucosal addressin cell adhesion molecule 1 (394 aa).

A signal peptide spans 1–19 (MEPILALLLALGPFQLSRG). Ig-like domains are found at residues 20–107 (QSFQ…ILVY), 108–225 (AFPD…TSPE), and 256–345 (PSTP…YVTG). At 20–353 (QSFQVNPPEP…TGQVIPNPSS (334 aa)) the chain is on the extracellular side. A glycan (N-linked (GlcNAc...) asparagine) is linked at Asn42. Intrachain disulfides connect Cys43–Cys89, Cys47–Cys93, and Cys130–Cys198. The tract at residues 219 to 255 (QSQTSPEPPSTTSAKPYILTSSHTTKAVSTGLSSVAL) is mucin-like. Cys282 and Cys330 are joined by a disulfide. The helical transmembrane segment at 354–374 (MVALWIGSLVLGLLALAFLAY) threads the bilayer. The Cytoplasmic portion of the chain corresponds to 375–394 (CLWKRYRPGPLPDSSSCTLL).

In terms of assembly, homodimer. Detected in Peyer patches and mesenteric lymph nodes but not in spleen.

The protein localises to the membrane. Cell adhesion leukocyte receptor expressed by mucosal venules, helps to direct lymphocyte traffic into mucosal tissues including the Peyer patches and the intestinal lamina propria. It can bind both the integrin alpha-4/beta-7 and L-selectin, regulating both the passage and retention of leukocytes. In Rattus norvegicus (Rat), this protein is Mucosal addressin cell adhesion molecule 1 (Madcam1).